The chain runs to 102 residues: NADH-quinone oxidoreductase subunit K (102 aa).

The next 3 helical transmembrane spans lie at 5-25 (IAHYLTVSAIMFTVGIFGIFL), 31-51 (IIILMSIELILLSVNLNFVAF), and 66-86 (FILTVAAAEAAIGLAILVVFF).

The protein belongs to the complex I subunit 4L family. As to quaternary structure, NDH-1 is composed of 14 different subunits. Subunits NuoA, H, J, K, L, M, N constitute the membrane sector of the complex.

The protein resides in the cell inner membrane. It catalyses the reaction a quinone + NADH + 5 H(+)(in) = a quinol + NAD(+) + 4 H(+)(out). Functionally, NDH-1 shuttles electrons from NADH, via FMN and iron-sulfur (Fe-S) centers, to quinones in the respiratory chain. The immediate electron acceptor for the enzyme in this species is believed to be ubiquinone. Couples the redox reaction to proton translocation (for every two electrons transferred, four hydrogen ions are translocated across the cytoplasmic membrane), and thus conserves the redox energy in a proton gradient. The polypeptide is NADH-quinone oxidoreductase subunit K (Bartonella bacilliformis (strain ATCC 35685 / KC583 / Herrer 020/F12,63)).